Here is a 321-residue protein sequence, read N- to C-terminus: Olfactory receptor 51G1 (321 aa).

At 1–27 the chain is on the extracellular side; the sequence is MTILLNSSLQRATFFLTGFQGLEGLHG. Asn6 carries an N-linked (GlcNAc...) asparagine glycan. A helical transmembrane segment spans residues 28 to 48; the sequence is WISIPFCFIYLTVILGNLTIL. The Cytoplasmic segment spans residues 49–56; that stretch reads HVICTDAT. The helical transmembrane segment at 57–77 threads the bilayer; that stretch reads LHGPMYYFLGMLAVTDLGLCL. Topologically, residues 78–101 are extracellular; sequence STLPTVLGIFWFDTREIGIPACFT. Residues Cys99 and Cys191 are joined by a disulfide bond. A helical membrane pass occupies residues 102-122; it reads QLFFIHTLSSMESSVLLSMSI. Residues 123 to 141 lie on the Cytoplasmic side of the membrane; the sequence is DRYVAVCNPLHDSTVLTPA. The chain crosses the membrane as a helical span at residues 142 to 162; the sequence is CIVKMGLSSVLRSALLILPLP. Topologically, residues 163-198 are extracellular; the sequence is FLLKRFQYCHSHVLAHAYCLHLEIMKLACSSIIVNH. Residues 199–219 traverse the membrane as a helical segment; that stretch reads IYGLFVVACTVGVDSLLIFLS. Over 220–239 the chain is Cytoplasmic; the sequence is YALILRTVLSIASHQERLRA. Residues 240–260 traverse the membrane as a helical segment; sequence LNTCVSHICAVLLFYIPMIGL. Residues 261-275 lie on the Extracellular side of the membrane; sequence SLVHRFGEHLPRVVH. The helical transmembrane segment at 276 to 296 threads the bilayer; sequence LFMSYVYLLVPPLMNPIIYSI. Over 297 to 321 the chain is Cytoplasmic; it reads KTKQIRQRIIKKFQFIKSLRCFWKD.

The protein belongs to the G-protein coupled receptor 1 family.

Its subcellular location is the cell membrane. Functionally, odorant receptor. The protein is Olfactory receptor 51G1 (OR51G1) of Homo sapiens (Human).